The sequence spans 131 residues: ATP synthase epsilon chain (131 aa).

Belongs to the ATPase epsilon chain family. F-type ATPases have 2 components, CF(1) - the catalytic core - and CF(0) - the membrane proton channel. CF(1) has five subunits: alpha(3), beta(3), gamma(1), delta(1), epsilon(1). CF(0) has three main subunits: a, b and c.

The protein localises to the cell membrane. Functionally, produces ATP from ADP in the presence of a proton gradient across the membrane. The protein is ATP synthase epsilon chain of Clostridium novyi (strain NT).